The primary structure comprises 144 residues: Eukaryotic translation initiation factor 1A, Y-chromosomal (144 aa).

Over residues 1–15 the composition is skewed to basic residues; that stretch reads MPKNKGKGGKNRRRG. Residues 1–26 form a disordered region; it reads MPKNKGKGGKNRRRGKNENESEKREL. A compositionally biased stretch (basic and acidic residues) spans 16 to 26; the sequence is KNENESEKREL. The S1-like domain occupies 22-96; that stretch reads EKRELVFKED…NKADVILKYN (75 aa). Lys-88 participates in a covalent cross-link: Glycyl lysine isopeptide (Lys-Gly) (interchain with G-Cter in ubiquitin). The segment at 114-144 is disordered; it reads KINETDTFGPGDDDEVQFDDIGDDDEDIDDI. The span at 124 to 144 shows a compositional bias: acidic residues; sequence GDDDEVQFDDIGDDDEDIDDI.

It belongs to the eIF-1A family. In terms of assembly, component of the 43S pre-initiation complex (43S PIC), which is composed of the 40S ribosomal subunit, EIF1, eIF1A (EIF1AX), eIF3 complex, EIF5 and eIF2-GTP-initiator tRNA complex (eIF2 ternary complex). Interacts with EIF5; this interaction contributes to the maintenance of EIF1 within the open 43S PIC. Interacts through its C-terminal domain (CTD) with the CTD of EIF5B; from the location of the start codon by the 43S complex until the formation of the 80S complex. Ubiquitous.

It is found in the cytoplasm. In terms of biological role, component of the 43S pre-initiation complex (43S PIC), which binds to the mRNA cap-proximal region, scans mRNA 5'-untranslated region, and locates the initiation codon. This protein enhances formation of the cap-proximal complex. Together with EIF1, facilitates scanning, start codon recognition, promotion of the assembly of 48S complex at the initiation codon (43S PIC becomes 48S PIC after the start codon is reached), and dissociation of aberrant complexes. After start codon location, together with EIF5B orients the initiator methionine-tRNA in a conformation that allows 60S ribosomal subunit joining to form the 80S initiation complex. Is released after 80S initiation complex formation, just after GTP hydrolysis by EIF5B, and before release of EIF5B. Its globular part is located in the A site of the 40S ribosomal subunit. Its interaction with EIF5 during scanning contribute to the maintenance of EIF1 within the open 43S PIC. In contrast to yeast orthologs, does not bind EIF1. This is Eukaryotic translation initiation factor 1A, Y-chromosomal (EIF1AY) from Pan troglodytes (Chimpanzee).